Here is a 487-residue protein sequence, read N- to C-terminus: Acetyl-coenzyme A carboxylase carboxyl transferase subunit beta, chloroplastic (487 aa).

The CoA carboxyltransferase N-terminal domain occupies 223-487 (LWVQCENCYG…LHAFFPLNQN (265 aa)). Residues C227, C230, C246, and C249 each contribute to the Zn(2+) site. Residues 227–249 (CENCYGLNYKKSFKSKMNLCEQC) form a C4-type zinc finger.

It belongs to the AccD/PCCB family. In terms of assembly, acetyl-CoA carboxylase is a heterohexamer composed of biotin carboxyl carrier protein, biotin carboxylase and 2 subunits each of ACCase subunit alpha and ACCase plastid-coded subunit beta (accD). It depends on Zn(2+) as a cofactor.

Its subcellular location is the plastid. The protein localises to the chloroplast stroma. The catalysed reaction is N(6)-carboxybiotinyl-L-lysyl-[protein] + acetyl-CoA = N(6)-biotinyl-L-lysyl-[protein] + malonyl-CoA. It functions in the pathway lipid metabolism; malonyl-CoA biosynthesis; malonyl-CoA from acetyl-CoA: step 1/1. Its function is as follows. Component of the acetyl coenzyme A carboxylase (ACC) complex. Biotin carboxylase (BC) catalyzes the carboxylation of biotin on its carrier protein (BCCP) and then the CO(2) group is transferred by the transcarboxylase to acetyl-CoA to form malonyl-CoA. This chain is Acetyl-coenzyme A carboxylase carboxyl transferase subunit beta, chloroplastic, found in Panax ginseng (Korean ginseng).